We begin with the raw amino-acid sequence, 943 residues long: Leucine--tRNA ligase (943 aa).

A 'HIGH' region motif is present at residues 40–51 (PYPSGAGLHVGH). The 'KMSKS' region signature appears at 717–721 (KMSKS). Lys-720 contacts ATP.

The protein belongs to the class-I aminoacyl-tRNA synthetase family.

The protein resides in the cytoplasm. The enzyme catalyses tRNA(Leu) + L-leucine + ATP = L-leucyl-tRNA(Leu) + AMP + diphosphate. This chain is Leucine--tRNA ligase, found in Bacteroides fragilis (strain ATCC 25285 / DSM 2151 / CCUG 4856 / JCM 11019 / LMG 10263 / NCTC 9343 / Onslow / VPI 2553 / EN-2).